The sequence spans 262 residues: MSRAAPFTVLIPARLASTRLPNKPLADIAGLPMVVHVARRASQSGAQRCVVAADDARIVQACQAHGVQALLTRADHASGSDRLAEACELLGLAGEDIVVNVQGDEPLIDPRLIDAVAALLHARGDASMGTAAHAIDSAEDFANPNVVKVVLDAQGLAHYFSRAPIPHARDHGPGSLWWQPGQTGVPVGFAPLRHIGIYSYRAGFLRRFPQLPAAPTEQLEALEQLRALWHGHRIAVHVTGSAPGAGVDTPADLERVRTLLGG.

This sequence belongs to the KdsB family.

It is found in the cytoplasm. It carries out the reaction 3-deoxy-alpha-D-manno-oct-2-ulosonate + CTP = CMP-3-deoxy-beta-D-manno-octulosonate + diphosphate. The protein operates within nucleotide-sugar biosynthesis; CMP-3-deoxy-D-manno-octulosonate biosynthesis; CMP-3-deoxy-D-manno-octulosonate from 3-deoxy-D-manno-octulosonate and CTP: step 1/1. Its pathway is bacterial outer membrane biogenesis; lipopolysaccharide biosynthesis. In terms of biological role, activates KDO (a required 8-carbon sugar) for incorporation into bacterial lipopolysaccharide in Gram-negative bacteria. The polypeptide is 3-deoxy-manno-octulosonate cytidylyltransferase (Acidovorax ebreus (strain TPSY) (Diaphorobacter sp. (strain TPSY))).